The primary structure comprises 353 residues: Photosystem II protein D1 (353 aa).

Thr2 bears the N-acetylthreonine mark. Thr2 is modified (phosphothreonine). 3 helical membrane-spanning segments follow: residues 29 to 46 (YIGW…TATS), 118 to 133 (HFLL…EWEL), and 142 to 156 (WIAV…AATA). Residue His118 participates in chlorophyll a binding. Tyr126 is a binding site for pheophytin a. The [CaMn4O5] cluster site is built by Asp170 and Glu189. Residues 197-218 (FHMLGVAGVFGGSLFSAMHGSL) traverse the membrane as a helical segment. His198 lines the chlorophyll a pocket. A quinone-binding positions include His215 and 264-265 (SF). His215 contributes to the Fe cation binding site. A Fe cation-binding site is contributed by His272. Residues 274–288 (FLAAWPVVGIWFTAL) form a helical membrane-spanning segment. His332, Glu333, Asp342, and Ala344 together coordinate [CaMn4O5] cluster. Residues 345-353 (AVEAPAVNG) constitute a propeptide that is removed on maturation.

It belongs to the reaction center PufL/M/PsbA/D family. As to quaternary structure, PSII is composed of 1 copy each of membrane proteins PsbA, PsbB, PsbC, PsbD, PsbE, PsbF, PsbH, PsbI, PsbJ, PsbK, PsbL, PsbM, PsbT, PsbX, PsbY, PsbZ, Psb30/Ycf12, at least 3 peripheral proteins of the oxygen-evolving complex and a large number of cofactors. It forms dimeric complexes. Requires The D1/D2 heterodimer binds P680, chlorophylls that are the primary electron donor of PSII, and subsequent electron acceptors. It shares a non-heme iron and each subunit binds pheophytin, quinone, additional chlorophylls, carotenoids and lipids. D1 provides most of the ligands for the Mn4-Ca-O5 cluster of the oxygen-evolving complex (OEC). There is also a Cl(-1) ion associated with D1 and D2, which is required for oxygen evolution. The PSII complex binds additional chlorophylls, carotenoids and specific lipids. as cofactor. Tyr-161 forms a radical intermediate that is referred to as redox-active TyrZ, YZ or Y-Z. In terms of processing, C-terminally processed by CTPA; processing is essential to allow assembly of the oxygen-evolving complex and thus photosynthetic growth.

Its subcellular location is the plastid. The protein resides in the chloroplast thylakoid membrane. The catalysed reaction is 2 a plastoquinone + 4 hnu + 2 H2O = 2 a plastoquinol + O2. Functionally, photosystem II (PSII) is a light-driven water:plastoquinone oxidoreductase that uses light energy to abstract electrons from H(2)O, generating O(2) and a proton gradient subsequently used for ATP formation. It consists of a core antenna complex that captures photons, and an electron transfer chain that converts photonic excitation into a charge separation. The D1/D2 (PsbA/PsbD) reaction center heterodimer binds P680, the primary electron donor of PSII as well as several subsequent electron acceptors. The polypeptide is Photosystem II protein D1 (Conocephalum conicum (Snakeskin liverwort)).